The chain runs to 30 residues: Cytochrome b6-f complex subunit 8 (30 aa).

Residues 4–24 (IISLGWGSLLAIFSFSIALVV) form a helical membrane-spanning segment.

The protein belongs to the PetN family. The 4 large subunits of the cytochrome b6-f complex are cytochrome b6, subunit IV (17 kDa polypeptide, PetD), cytochrome f and the Rieske protein, while the 4 small subunits are PetG, PetL, PetM and PetN. The complex functions as a dimer.

Its subcellular location is the plastid. It is found in the chloroplast thylakoid membrane. Component of the cytochrome b6-f complex, which mediates electron transfer between photosystem II (PSII) and photosystem I (PSI), cyclic electron flow around PSI, and state transitions. This Gracilaria tenuistipitata var. liui (Red alga) protein is Cytochrome b6-f complex subunit 8.